A 452-amino-acid polypeptide reads, in one-letter code: GTPase Der (452 aa).

2 EngA-type G domains span residues 4–169 (PIVA…PPPE) and 177–352 (IKVA…EEHR). GTP contacts are provided by residues 10–17 (GRPNVGKS), 57–61 (DTGGL), 120–123 (NKCE), 183–190 (GRPNVGKS), 230–234 (DTAGI), and 295–298 (NKWD). One can recognise a KH-like domain in the interval 353–438 (RRVTTAVINE…PIRLLWRGKK (86 aa)).

The protein belongs to the TRAFAC class TrmE-Era-EngA-EngB-Septin-like GTPase superfamily. EngA (Der) GTPase family. As to quaternary structure, associates with the 50S ribosomal subunit.

Its function is as follows. GTPase that plays an essential role in the late steps of ribosome biogenesis. The polypeptide is GTPase Der (Rippkaea orientalis (strain PCC 8801 / RF-1) (Cyanothece sp. (strain PCC 8801))).